The sequence spans 440 residues: Trigger factor (440 aa).

In terms of domain architecture, PPIase FKBP-type spans 163–248; it reads GEIVSVTFEA…VHVIKERTLP (86 aa).

This sequence belongs to the FKBP-type PPIase family. Tig subfamily.

The protein localises to the cytoplasm. The enzyme catalyses [protein]-peptidylproline (omega=180) = [protein]-peptidylproline (omega=0). In terms of biological role, involved in protein export. Acts as a chaperone by maintaining the newly synthesized protein in an open conformation. Functions as a peptidyl-prolyl cis-trans isomerase. This Solidesulfovibrio magneticus (strain ATCC 700980 / DSM 13731 / RS-1) (Desulfovibrio magneticus) protein is Trigger factor.